The sequence spans 198 residues: UPF0301 protein BDI_1431 (198 aa).

Belongs to the UPF0301 (AlgH) family.

This is UPF0301 protein BDI_1431 from Parabacteroides distasonis (strain ATCC 8503 / DSM 20701 / CIP 104284 / JCM 5825 / NCTC 11152).